A 142-amino-acid polypeptide reads, in one-letter code: Large ribosomal subunit protein uL13 (142 aa).

It belongs to the universal ribosomal protein uL13 family. In terms of assembly, part of the 50S ribosomal subunit.

This protein is one of the early assembly proteins of the 50S ribosomal subunit, although it is not seen to bind rRNA by itself. It is important during the early stages of 50S assembly. This is Large ribosomal subunit protein uL13 from Coxiella burnetii (strain CbuK_Q154) (Coxiella burnetii (strain Q154)).